A 327-amino-acid polypeptide reads, in one-letter code: MDTWMVLLGLQILLLPLLAHCTAPASTLRFVAVGDWGGVPNAPFHTAREMANAKEIARTVQIMGADFIMSLGDNFYFTGVHDANDKRFQETFEDVFSDRALRNIPWYVLAGNHDHLGNVSAQIAYSKISKRWNFPSPYYRLRFKVPRSNITVAIFMLDTVMLCGNSDDFVSQQPEMPRDLGVARTQLSWLKKQLAAAKEDYVLVAGHYPIWSIAEHGPTRCLVKNLRPLLAAYGVTAYLCGHDHNLQYLQDENGVGYVLSGAGNFMDPSVRHQRKVPNGYLRFHYGSEDSLGGFTYVEIGSKEMSITYVEASGKSLFKTSLPRRPRP.

An N-terminal signal peptide occupies residues 1-22; sequence MDTWMVLLGLQILLLPLLAHCT. Residues Asp35, Asp73, Tyr76, and Asn112 each contribute to the Fe cation site. Residues Asn118 and Asn149 are each glycosylated (N-linked (GlcNAc...) asparagine). A disulfide bridge links Cys163 with Cys221. His207, His242, and His244 together coordinate Fe cation.

Exists either as monomer or, after proteolytic processing, as a dimer of two chains linked by disulfide bond(s). Fe cation serves as cofactor. In terms of tissue distribution, characteristic constituent of osteoclasts and some mononuclear preosteoclasts. Preferentially expressed in skeletal tissues.

The protein resides in the lysosome. It catalyses the reaction a phosphate monoester + H2O = an alcohol + phosphate. May play a role in the process of bone resorption. The osteoclastic trap acts on nucleotide tri- and diphosphates with higher affinity, compared with other substrates. The polypeptide is Tartrate-resistant acid phosphatase type 5 (Acp5) (Rattus norvegicus (Rat)).